Consider the following 1299-residue polypeptide: Tubulin polyglutamylase TTLL5 (1299 aa).

Residues 62-407 (RYHLSYKIVR…VCQDPAQRAS (346 aa)) enclose the TTL domain. Residues Lys180, 186-187 (RG), 208-211 (SRYI), and 221-223 (KFD) contribute to the ATP site. Arg186 contributes to the a protein binding site. Arg247 provides a ligand contact to L-glutamate. ATP is bound at residue 268-269 (TN). Positions 270, 271, and 293 each coordinate L-glutamate. 3 residues coordinate Mg(2+): Asp353, Glu366, and Asn368. The c-MTBD region stretch occupies residues 378–488 (PLDLKIKASM…RGGFIRIFPT (111 aa)). Lys384 contacts L-glutamate. Disordered regions lie at residues 589–626 (EMNVKTETESEEEEEVALDNEEEEQEASQEESAGFLRE), 832–853 (GTHSKSSKNNNSYSDSGAKGDH), 918–941 (SSVTTSDLSPGPGHHSSLSQIPSA), 1088–1130 (RSSA…RSLQ), and 1217–1275 (SSAT…QLNG). Residues 597–617 (ESEEEEEVALDNEEEEQEASQ) show a composition bias toward acidic residues. A compositionally biased stretch (low complexity) spans 838–847 (SKNNNSYSDS). Composition is skewed to polar residues over residues 1104 to 1130 (SGPTWSTQSDPQAPENHSSPPGSRSLQ), 1217 to 1230 (SSATASGQKPTTLP), and 1258 to 1275 (ATSQRASKGSSAEGQLNG).

It belongs to the tubulin--tyrosine ligase family. Interacts with the transcriptional coactivators NCOA1/SRC-1 and NCOA2/TIF2. Mg(2+) serves as cofactor.

The protein resides in the cell projection. Its subcellular location is the cilium. It localises to the cytoplasm. It is found in the cytoskeleton. The protein localises to the cilium basal body. The protein resides in the nucleus. The catalysed reaction is L-glutamyl-[protein] + L-glutamate + ATP = gamma-L-glutamyl-L-glutamyl-[protein] + ADP + phosphate + H(+). The enzyme catalyses (L-glutamyl)(n)-gamma-L-glutamyl-L-glutamyl-[protein] + L-glutamate + ATP = (L-glutamyl)(n+1)-gamma-L-glutamyl-L-glutamyl-[protein] + ADP + phosphate + H(+). In terms of biological role, polyglutamylase which modifies tubulin, generating polyglutamate side chains on the gamma-carboxyl group of specific glutamate residues within the C-terminal tail of tubulin. Preferentially mediates ATP-dependent initiation step of the polyglutamylation reaction over the elongation step. Preferentially modifies the alpha-tubulin tail over a beta-tail. Required for CCSAP localization to both polyglutamylated spindle and cilia microtubules. Increases the effects of transcriptional coactivator NCOA2/TIF2 in glucocorticoid receptor-mediated repression and induction and in androgen receptor-mediated induction. In Pongo abelii (Sumatran orangutan), this protein is Tubulin polyglutamylase TTLL5 (TTLL5).